Reading from the N-terminus, the 482-residue chain is Histone deacetylase 1 (482 aa).

Positions R9–D321 are histone deacetylase. The 1D-myo-inositol 1,4,5,6-tetrakisphosphate site is built by G27 and K31. N6-acetyllysine; alternate is present on K74. A Glycyl lysine isopeptide (Lys-Gly) (interchain with G-Cter in SUMO2); alternate cross-link involves residue K74. Residue H141 is part of the active site. Zn(2+) contacts are provided by D176 and H178. The residue at position 220 (K220) is an N6-acetyllysine. C261 is subject to S-nitrosocysteine. D264 contributes to the Zn(2+) binding site. R270 lines the 1D-myo-inositol 1,4,5,6-tetrakisphosphate pocket. Residue C273 is modified to S-nitrosocysteine. A compositionally biased stretch (acidic residues) spans P390–D400. The tract at residues P390–A482 is disordered. Phosphoserine is present on residues S393, S406, S409, S421, and S423. Basic and acidic residues predominate over residues P401–C416. Positions E417–G427 are enriched in acidic residues. Position 432 is an N6-methylated lysine; by EHMT2 (K432). Residue K438 forms a Glycyl lysine isopeptide (Lys-Gly) (interchain with G-Cter in SUMO2) linkage. The segment covering V443–A482 has biased composition (basic and acidic residues). K444 participates in a covalent cross-link: Glycyl lysine isopeptide (Lys-Gly) (interchain with G-Cter in SUMO2); alternate. K444 is covalently cross-linked (Glycyl lysine isopeptide (Lys-Gly) (interchain with G-Cter in SUMO); alternate). Residues K456, K457, and K473 each participate in a glycyl lysine isopeptide (Lys-Gly) (interchain with G-Cter in SUMO2) cross-link. K476 participates in a covalent cross-link: Glycyl lysine isopeptide (Lys-Gly) (interchain with G-Cter in SUMO2); alternate. K476 is covalently cross-linked (Glycyl lysine isopeptide (Lys-Gly) (interchain with G-Cter in SUMO); alternate). A Glycyl lysine isopeptide (Lys-Gly) (interchain with G-Cter in SUMO2) cross-link involves residue K480.

It belongs to the histone deacetylase family. HD type 1 subfamily. Part of the core histone deacetylase (HDAC) complex composed of HDAC1, HDAC2, RBBP4 and RBBP7, the core complex associates with SIN3, SAP18 and SAP30 to form the SIN3 HDAC complex. Component of the nucleosome remodeling and deacetylase (NuRD) repressor complex, composed of core proteins MTA1, MTA2, MTA3, RBBP4, RBBP7, HDAC1, HDAC2, MBD2, MBD3, and peripherally associated proteins CDK2AP1, CDK2AP2, GATAD2A, GATAD2B, CHD3, CHD4 and CHD5. The exact stoichiometry of the NuRD complex is unknown, and some subunits such as MBD2 and MBD3, GATAD2A and GATAD2B, and CHD3, CHD4 and CHD5 define mutually exclusive NuRD complexes. Component of a BHC histone deacetylase complex that contains HDAC1, HDAC2, HMG20B/BRAF35, KDM1A, RCOR1/CoREST and PHF21A/BHC80. The BHC complex may also contain ZMYM2, ZNF217, ZMYM3, GSE1 and GTF2I. Component of a mSin3A corepressor complex that contains SIN3A, SAP130, SUDS3/SAP45, ARID4B/SAP180, HDAC1 and HDAC2. Found in a trimeric complex with APBB1 and TSHZ3; the interaction between HDAC1 and APBB1 is mediated by TSHZ3. Forms a complex comprising APPL1, RUVBL2, APPL2, CTNNB1 and HDAC2. Component of a RCOR/GFI/KDM1A/HDAC complex. Part of a complex composed of TRIM28, HDAC1, HDAC2 and EHMT2. Part of a complex containing at least CDYL, MIER1, MIER2, HDAC1 and HDAC2. The large PER complex involved in the histone deacetylation is composed of at least HDAC1, PER2, SFPQ and SIN3A. Associates with the 9-1-1 complex; interacts with HUS1. Found in a complex with DNMT3A and HDAC7. Found in a complex with YY1, SIN3A and GON4L. Identified in a histone deacetylase complex that contains DNTTIP1, HDAC1 and MIDEAS; this complex assembles into a tetramer that contains four copies of each protein chain. Found in a complex composed of at least SINHCAF, SIN3A, HDAC1, SAP30, RBBP4, OGT and TET1. Component of the SIN3B complex, which includes SIN3B, HDAC1, PHF12 and MORF4L1. Interacts with GFI1; the interaction is direct. Interacts directly with GFI1B. Interacts with TSHZ3 (via N-terminus); the interaction is direct. Interacts with APEX1; the interaction is not dependent on the acetylated status of APEX1. Interacts with BANP. Interacts with BAZ2A/TIP5. Interacts with BCL6. Interacts with BCOR. Interacts with BHLHE40/DEC1. Interacts with BRCC3; this interaction is enhanced in the presence of PWWP2B. Interacts with BRMS1. Interacts with BRMS1L. Interacts with C10orf90/FATS (via its N-terminal); the interaction prevents binding of HDAC1 to CDKN1A/p21 and facilitates the acetylation and stabilization of CDKN1A/p21. Interacts with CBFA2T3. Interacts with CCAR2. Interacts with CDK2AP1. Interacts with CHD3. Interacts with CHD4. Interacts with CHFR. Interacts with CIART. Interacts with CDKN1A/p21. Interacts with CDK5 complexed to CDK5R1 (p25). Interacts with CRY1. Interacts with DAXX. Interacts with DDIT3/CHOP. Interacts with DDX5. Interacts with DHX36; this interaction occurs in a RNA-dependent manner. Interacts with DNMT1. Interacts with DNTTIP1. Interacts with E4F1. Interacts with EP300. Interacts with ERCC6. Interacts with GATAD2A. Interacts with HCFC1. Interacts with HDAC9. Interacts with HUS1. Interacts with INSM1. Interacts with KDM4A. Interacts with KDM5A; this interaction impairs histone deacetylation. Interacts with KDM5B. Interacts with KLF1. Interacts with MBD3L2. Interacts with MIER1. Interacts with NFE4. Interacts with NR4A2/NURR1. Interacts with NR1D2 (via C-terminus). Interacts with NRIP1. Interacts with NSD2. Interacts with PACS2. Interacts with PHB2. Interacts with PPHLN1. Interacts with PRDM6. Interacts with PRDM16. Interacts with PWWP2A in a MTA1-dependent manner. Interacts with PWWP2B. Interacts with RB1. Interacts with RERE. Interacts with SANBR (via the BTB domain). Interacts with SAMSN1. Interacts with SAP30L. Interacts with SETDB1. Interacts with SIN3A. Interacts with SMAD3. Interacts with SMAD4; positively regulated by ZBTB7A. Interacts with SMARCAD1. Interacts with SMARCA4/BRG1. Interacts with SMYD2. Interacts with SMYD4 (via MYND-type zinc finger). Interacts with SP1; the interaction deacetylates SP1 and regulates its transcriptional activity. Interacts with SP3; the interaction deacetylates SP3 and regulates its transcriptional activity. In vitro, C(18) ceramides increase this interaction and the subsequent SP3 deacetylation and SP3-mediated repression of the TERT promoter. Interacts with SPEN/MINT. Interacts with SPHK2. Interacts with SUV39H1. Interacts with TGIF. Interacts with TGIF2. Interacts with TRAF6. Interacts with TRIM28; the interaction recruits HDAC1 to E2F1 and inhibits its acetylation. Interacts with TSC22D3 isoform 1; this interaction affects HDAC1 activity on MYOG promoter and thus inhibits MYOD1 transcriptional activity. Interacts with UHRF1. Interacts with UHRF2. Interacts with ZBTB7A. Interacts with ZMYND8. Interacts with ZMYND15. Interacts with ZNF431. Interacts with ZNF516; this interaction is enhanced in the presence of PWWP2B. Interacts with ZNF541. Interacts with ZNF638. Interacts with ZNHIT1. Interacts with the non-histone region of MACROH2A1. Identified in a complex with HDAC2, KCTD19, DNTTIP1 and ZNF541. Interacts with MSX3. Interacts with VRK1. It depends on Zn(2+) as a cofactor. Post-translationally, sumoylated on Lys-444 and Lys-476; which promotes enzymatic activity. Desumoylated by SENP1. In terms of processing, phosphorylation on Ser-421 and Ser-423 promotes enzymatic activity and interactions with NuRD and SIN3 complexes. Phosphorylated by CDK5. Ubiquitinated by CHFR and KCTD11, leading to its degradation by the proteasome.

Its subcellular location is the nucleus. The enzyme catalyses N(6)-acetyl-L-lysyl-[histone] + H2O = L-lysyl-[histone] + acetate. The catalysed reaction is N(6)-acetyl-L-lysyl-[protein] + H2O = L-lysyl-[protein] + acetate. It carries out the reaction N(6)-(2E)-butenoyl-L-lysyl-[protein] + H2O = (2E)-2-butenoate + L-lysyl-[protein]. It catalyses the reaction N(6)-[(S)-lactoyl]-L-lysyl-[protein] + H2O = (S)-lactate + L-lysyl-[protein]. With respect to regulation, inositol tetraphosphate (1D-myo-inositol 1,4,5,6-tetrakisphosphate) may act as an intermolecular glue between HDAC1 and N-Cor repressor complex components. Histone deacetylase that catalyzes the deacetylation of lysine residues on the N-terminal part of the core histones (H2A, H2B, H3 and H4). Histone deacetylation gives a tag for epigenetic repression and plays an important role in transcriptional regulation, cell cycle progression and developmental events. Histone deacetylases act via the formation of large multiprotein complexes. Acts as a component of the histone deacetylase NuRD complex which participates in the remodeling of chromatin. As part of the SIN3B complex is recruited downstream of the constitutively active genes transcriptional start sites through interaction with histones and mitigates histone acetylation and RNA polymerase II progression within transcribed regions contributing to the regulation of transcription. Also functions as a deacetylase for non-histone targets, such as NR1D2, RELA, SP1, SP3, STAT3 and TSHZ3. Deacetylates SP proteins, SP1 and SP3, and regulates their function. Component of the BRG1-RB1-HDAC1 complex, which negatively regulates the CREST-mediated transcription in resting neurons. Upon calcium stimulation, HDAC1 is released from the complex and CREBBP is recruited, which facilitates transcriptional activation. Deacetylates TSHZ3 and regulates its transcriptional repressor activity. Deacetylates 'Lys-310' in RELA and thereby inhibits the transcriptional activity of NF-kappa-B. Deacetylates NR1D2 and abrogates the effect of KAT5-mediated relieving of NR1D2 transcription repression activity. Component of a RCOR/GFI/KDM1A/HDAC complex that suppresses, via histone deacetylase (HDAC) recruitment, a number of genes implicated in multilineage blood cell development. Involved in CIART-mediated transcriptional repression of the circadian transcriptional activator: CLOCK-BMAL1 heterodimer. Required for the transcriptional repression of circadian target genes, such as PER1, mediated by the large PER complex or CRY1 through histone deacetylation. In addition to protein deacetylase activity, also has protein-lysine deacylase activity: acts as a protein decrotonylase and delactylase by mediating decrotonylation ((2E)-butenoyl) and delactylation (lactoyl) of histones, respectively. The protein is Histone deacetylase 1 (Hdac1) of Rattus norvegicus (Rat).